A 319-amino-acid chain; its full sequence is Nuclear hormone receptor family member nhr-174 (319 aa).

The nuclear receptor DNA-binding region spans 7–81 (DPVCPVCEFP…AGMKRNLVRQ (75 aa)). 2 NR C4-type zinc fingers span residues 10-31 (CPVC…CGAC) and 47-63 (CEKK…CRAC). The NR LBD domain maps to 130 to 319 (EAEKDVSKIL…SMKKSRYLQF (190 aa)).

The protein belongs to the nuclear hormone receptor family.

It localises to the nucleus. In terms of biological role, orphan nuclear receptor. This chain is Nuclear hormone receptor family member nhr-174 (nhr-174), found in Caenorhabditis elegans.